Here is a 260-residue protein sequence, read N- to C-terminus: Methylphosphonate hydroxylase (260 aa).

Lys107 serves as a coordination point for 2-oxoglutarate. Fe cation contacts are provided by His117, Asp119, and His195.

The protein belongs to the PhyH family. The cofactor is Fe(2+).

It catalyses the reaction methylphosphonate + 2-oxoglutarate + O2 = hydroxymethylphosphonate + succinate + CO2. In terms of biological role, part of an oxidative pathway for utilization of methylphosphonic acid as a phosphate source. Catalyzes the conversion of methylphosphonic acid to hydroxymethylphosphonic acid. Is specific for the hydroxylation of methylphosphonate. In Gimesia maris (strain ATCC 29201 / DSM 8797 / 534-30) (Planctomyces maris), this protein is Methylphosphonate hydroxylase.